The chain runs to 469 residues: Calcium-binding mitochondrial carrier protein SCaMC-2-A (469 aa).

Topologically, residues 1–189 are mitochondrial intermembrane; it reads MLCLCLYVPV…EHLTGMWWRH (189 aa). 3 EF-hand domains span residues 47–80, 78–113, and 114–149; these read TYRR…QDHE, DHEK…LGVH, and ISLK…QPAE. Positions 64, 66, and 71 each coordinate Ca(2+). 3 Solcar repeats span residues 184–270, 278–363, and 375–463; these read GMWW…IKRV, LGIS…LKNT, and PGVF…IKST. The helical transmembrane segment at 190–207 threads the bilayer; it reads LVSGGGAGAVSRTCTAPL. The Mitochondrial matrix segment spans residues 208–244; it reads DRLKVLMQVHGCQGKSMCLMSGLTQMIKEGGVRSLWR. A helical membrane pass occupies residues 245–264; the sequence is GNGINVIKIAPETALKFMAY. Over 265–287 the chain is Mitochondrial intermembrane; that stretch reads EQIKRVMGSSQETLGISERFVAG. The helical transmembrane segment at 288-301 threads the bilayer; it reads SLAGVIAQSTIYPM. The Mitochondrial matrix segment spans residues 302–337; the sequence is EVLKTRLALRKTGQYKGISDCAKHILKTEGMSAFYK. The chain crosses the membrane as a helical span at residues 338–357; sequence GYVPNMLGIIPYAGIDLAVY. At 358–380 the chain is on the mitochondrial intermembrane side; it reads ETLKNTWLQRYGTENADPGVFVL. The chain crosses the membrane as a helical span at residues 381–398; it reads LACGTVSSTCGQLASYPL. Topologically, residues 399-437 are mitochondrial matrix; that stretch reads ALIRTRMQAQASVEGSSQVSMTGLFKQIMKTEGPTGLYR. A helical membrane pass occupies residues 438-457; it reads GLTPNFLKVIPAVSISYVVY. Residues 458-469 are Mitochondrial intermembrane-facing; the sequence is EHIKSTLGVRSR.

This sequence belongs to the mitochondrial carrier (TC 2.A.29) family.

The protein localises to the mitochondrion inner membrane. Functionally, calcium-dependent mitochondrial solute carrier. The protein is Calcium-binding mitochondrial carrier protein SCaMC-2-A (slc25a25a) of Danio rerio (Zebrafish).